A 326-amino-acid polypeptide reads, in one-letter code: Acyl-CoA-binding domain-containing protein 4 (326 aa).

The 90-residue stretch at 10-99 (CQKQFQAAVS…MKLVAQKVID (90 aa)) folds into the ACB domain. An acyl-CoA contacts are provided by residues 21–30 (IQNLPKNGSY), 41–45 (YSYYK), Lys-67, and Tyr-86. Disordered regions lie at residues 147–170 (VQAA…SRLP) and 223–248 (KEAA…SLMG). Residue Ser-164 is modified to Phosphoserine.

Binds medium- and long-chain acyl-CoA esters and may function as an intracellular carrier of acyl-CoA esters. The protein is Acyl-CoA-binding domain-containing protein 4 (Acbd4) of Rattus norvegicus (Rat).